The following is a 418-amino-acid chain: Protease LasA (418 aa).

Positions 1 to 31 (MQHKRSRALASPRSPFLFALLALAVGGTANA) are cleaved as a signal peptide. Positions 32–236 (HDDGLPAFRY…ARQLQAKAAL (205 aa)) are excised as a propeptide. Residues histidine 259 and aspartate 272 each coordinate Zn(2+). Cysteine 301 and cysteine 347 are disulfide-bonded. Catalysis depends on proton donor/acceptor residues histidine 317 and histidine 356. Histidine 358 lines the Zn(2+) pocket. Cysteines 391 and 406 form a disulfide.

The protein belongs to the peptidase M23A family. Zn(2+) is required as a cofactor.

It is found in the secreted. Its function is as follows. Involved in proteolysis and elastolysis (degradation of the host protein elastin). Has staphylolytic activity (degrades pentaglycine cross-links in cell wall peptidoglycan), preferring Gly-Gly-|-X substrates where X is Ala or Gly. Enhances the elastolytic but not proteolytic activity of elastase (lasB) and elastolytic activity of other proteases. Degradation of elastin is likely to contribute to the pathogenicity of P.aeruginosa. This Pseudomonas aeruginosa (strain UCBPP-PA14) protein is Protease LasA (lasA).